The primary structure comprises 24 residues: M-poneritoxin-Ng1e (24 aa).

As to expression, expressed by the venom gland.

The protein resides in the secreted. Its subcellular location is the target cell membrane. Its function is as follows. Has a broad spectrum of activity against both Gram-positive and Gram-negative bacteria and S.cerevisiae. Has insecticidal and hemolytic activities. May act by disrupting the integrity of the bacterial cell membrane. The sequence is that of M-poneritoxin-Ng1e from Neoponera goeldii (Ponerine ant).